The following is a 308-amino-acid chain: Aspartate carbamoyltransferase catalytic subunit (308 aa).

Carbamoyl phosphate contacts are provided by Arg-59 and Thr-60. Lys-87 contributes to the L-aspartate binding site. The carbamoyl phosphate site is built by Arg-109, His-139, and Gln-142. Arg-172 and Arg-224 together coordinate L-aspartate. Positions 265 and 266 each coordinate carbamoyl phosphate.

The protein belongs to the aspartate/ornithine carbamoyltransferase superfamily. ATCase family. As to quaternary structure, heterododecamer (2C3:3R2) of six catalytic PyrB chains organized as two trimers (C3), and six regulatory PyrI chains organized as three dimers (R2).

The catalysed reaction is carbamoyl phosphate + L-aspartate = N-carbamoyl-L-aspartate + phosphate + H(+). The protein operates within pyrimidine metabolism; UMP biosynthesis via de novo pathway; (S)-dihydroorotate from bicarbonate: step 2/3. Its function is as follows. Catalyzes the condensation of carbamoyl phosphate and aspartate to form carbamoyl aspartate and inorganic phosphate, the committed step in the de novo pyrimidine nucleotide biosynthesis pathway. The protein is Aspartate carbamoyltransferase catalytic subunit of Enterococcus faecalis (strain ATCC 700802 / V583).